Here is a 108-residue protein sequence, read N- to C-terminus: uncharacterized protein (108 aa).

Residues 1 to 23 (MVDELEKNQVQPQETEENKENAL) are disordered.

This is an uncharacterized protein from Ureaplasma parvum serovar 3 (strain ATCC 700970).